Consider the following 418-residue polypeptide: UDP-N-acetylglucosamine 1-carboxyvinyltransferase (418 aa).

22-23 (KN) provides a ligand contact to phosphoenolpyruvate. Residue Arg-92 participates in UDP-N-acetyl-alpha-D-glucosamine binding. The active-site Proton donor is the Cys-116. Cys-116 is modified (2-(S-cysteinyl)pyruvic acid O-phosphothioketal). Residues 121–125 (RPIDL), Asp-305, and Leu-327 contribute to the UDP-N-acetyl-alpha-D-glucosamine site.

Belongs to the EPSP synthase family. MurA subfamily.

The protein localises to the cytoplasm. The catalysed reaction is phosphoenolpyruvate + UDP-N-acetyl-alpha-D-glucosamine = UDP-N-acetyl-3-O-(1-carboxyvinyl)-alpha-D-glucosamine + phosphate. Its pathway is cell wall biogenesis; peptidoglycan biosynthesis. Functionally, cell wall formation. Adds enolpyruvyl to UDP-N-acetylglucosamine. This chain is UDP-N-acetylglucosamine 1-carboxyvinyltransferase, found in Campylobacter jejuni subsp. jejuni serotype O:23/36 (strain 81-176).